Reading from the N-terminus, the 393-residue chain is Cysteine protease ATG4B (393 aa).

M1 is modified (N-acetylmethionine). Phosphoserine is present on S34. The active-site Nucleophile is the C74. C189 is subject to S-nitrosocysteine. Residues D278 and H280 contribute to the active site. S-nitrosocysteine occurs at positions 292 and 301. C292 and C361 form a disulfide bridge. A phosphoserine mark is found at S316 and S383. Residues 388 to 391 carry the LIR motif; it reads FEIL. Phosphoserine is present on S392.

This sequence belongs to the peptidase C54 family. In terms of assembly, interacts with PFKP; promoting phosphorylation of ATG4B at Ser-34. Interacts with GBP7. In terms of processing, phosphorylation at Ser-383 and Ser-392 promotes autophagy by increasing protein delipidation activity without affecting proteolytic activation of ATG8 proteins. Phosphorylation at Ser-316 by ULK1 inhibits autophagy by decreasing both proteolytic activation and delipidation activities. Phosphorylation at Ser-316 is dephosphorylated by protein phosphatase 2A (PP2A). Phosphorylation at Ser-34 by AKT2 promotes its hydrolase activity, leading to increased proteolytic activation and delipidation of ATG8 family proteins. Phosphorylation at Ser-34 by AKT1 promotes mitochondrial localization and inhibition of the F1F0-ATP synthase activity, leading to elevation of mitochondrial reactive oxygen species (ROS). Post-translationally, ubiquitinated by RNF5, leading to its degradation by the proteasome. S-nitrosylation at Cys-189 and Cys-292 in response to high glucose decreases both proteolytic activation and delipidation activities. In terms of processing, O-glycosylated by OGT, leading to increase protease activity, thereby promoting the proteolytic activation of ATG8 family proteins. Post-translationally, forms reversible intrachain disulfide bonds in response to oxidative stress. Forms interchain disulfide bonds, leading to formation of homooligomers in response to oxidation.

The protein localises to the cytoplasm. It localises to the cytosol. Its subcellular location is the cytoplasmic vesicle. The protein resides in the autophagosome. It is found in the endoplasmic reticulum. The protein localises to the mitochondrion. The enzyme catalyses [protein]-C-terminal L-amino acid-glycyl-phosphatidylethanolamide + H2O = [protein]-C-terminal L-amino acid-glycine + a 1,2-diacyl-sn-glycero-3-phosphoethanolamine. It carries out the reaction [protein]-C-terminal L-amino acid-glycyl-phosphatidylserine + H2O = [protein]-C-terminal L-amino acid-glycine + a 1,2-diacyl-sn-glycero-3-phospho-L-serine. Its activity is regulated as follows. Inhibited by N-ethylmaleimide. Redox-regulated during autophagy since reducing conditions activate ATG4A whereas an oxidizing environment such as the presence of H(2)O(2) inhibits its activity. The cysteine protease activity compounds is inhibited by styrylquinoline compounds 4-28 and LV-320. Its function is as follows. Cysteine protease that plays a key role in autophagy by mediating both proteolytic activation and delipidation of ATG8 family proteins. Required for canonical autophagy (macroautophagy), non-canonical autophagy as well as for mitophagy. The protease activity is required for proteolytic activation of ATG8 family proteins: cleaves the C-terminal amino acid of ATG8 proteins MAP1LC3A, MAP1LC3B, MAP1LC3C, GABARAPL1, GABARAPL2 and GABARAP, to reveal a C-terminal glycine. Exposure of the glycine at the C-terminus is essential for ATG8 proteins conjugation to phosphatidylethanolamine (PE) and insertion to membranes, which is necessary for autophagy. Protease activity is also required to counteract formation of high-molecular weight conjugates of ATG8 proteins (ATG8ylation): acts as a deubiquitinating-like enzyme that removes ATG8 conjugated to other proteins, such as ATG3. In addition to the protease activity, also mediates delipidation of ATG8 family proteins. Catalyzes delipidation of PE-conjugated forms of ATG8 proteins during macroautophagy. Also involved in non-canonical autophagy, a parallel pathway involving conjugation of ATG8 proteins to single membranes at endolysosomal compartments, by catalyzing delipidation of ATG8 proteins conjugated to phosphatidylserine (PS). Compared to other members of the family (ATG4A, ATG4C or ATG4C), constitutes the major protein for proteolytic activation of ATG8 proteins, while it displays weaker delipidation activity than other ATG4 paralogs. Involved in phagophore growth during mitophagy independently of its protease activity and of ATG8 proteins: acts by regulating ATG9A trafficking to mitochondria and promoting phagophore-endoplasmic reticulum contacts during the lipid transfer phase of mitophagy. In terms of biological role, (Microbial infection) Mediates cleavage of an ATG8 protein homolog coded in the genome of cytopathogenic bovine viral diarrhea virus (BVDV). This Bos taurus (Bovine) protein is Cysteine protease ATG4B (ATG4B).